Here is a 440-residue protein sequence, read N- to C-terminus: T-box transcription factor TBX20 (440 aa).

A DNA-binding region (T-box) is located at residues 103-282; the sequence is LWDKFHDLGT…SNPFAKGFRD (180 aa).

The protein resides in the nucleus. Transcriptional regulator that may be involved in heart developmental processes. This chain is T-box transcription factor TBX20 (tbx20), found in Xenopus tropicalis (Western clawed frog).